We begin with the raw amino-acid sequence, 459 residues long: Cysteine--tRNA ligase (459 aa).

Cys-31 contributes to the Zn(2+) binding site. Residues 33 to 43 (PTVYYNPHIGN) carry the 'HIGH' region motif. Residues Cys-216, His-241, and Glu-245 each contribute to the Zn(2+) site. The short motif at 274–278 (KMSKS) is the 'KMSKS' region element. Lys-277 serves as a coordination point for ATP.

It belongs to the class-I aminoacyl-tRNA synthetase family. As to quaternary structure, monomer. Requires Zn(2+) as cofactor.

The protein resides in the cytoplasm. The enzyme catalyses tRNA(Cys) + L-cysteine + ATP = L-cysteinyl-tRNA(Cys) + AMP + diphosphate. This is Cysteine--tRNA ligase from Rickettsia peacockii (strain Rustic).